The following is an 897-amino-acid chain: Translation initiation factor IF-2 (897 aa).

Positions 402-570 (NRAPIVTIMG…SILVQSEILE (169 aa)) constitute a tr-type G domain. The G1 stretch occupies residues 411–418 (GHVDHGKT). 411–418 (GHVDHGKT) contacts GTP. The segment at 436-440 (GITQN) is G2. Residues 458–461 (DTPG) form a G3 region. GTP contacts are provided by residues 458-462 (DTPGH) and 512-515 (NKID). The segment at 512 to 515 (NKID) is G4. A G5 region spans residues 548 to 550 (SAV).

This sequence belongs to the TRAFAC class translation factor GTPase superfamily. Classic translation factor GTPase family. IF-2 subfamily.

It localises to the cytoplasm. Its function is as follows. One of the essential components for the initiation of protein synthesis. Protects formylmethionyl-tRNA from spontaneous hydrolysis and promotes its binding to the 30S ribosomal subunits. Also involved in the hydrolysis of GTP during the formation of the 70S ribosomal complex. The sequence is that of Translation initiation factor IF-2 from Blochmanniella floridana.